Consider the following 436-residue polypeptide: Glutamyl-tRNA reductase (436 aa).

Residues 49–52, serine 109, 114–116, and glutamine 120 contribute to the substrate site; these read TCNR and EGQ. Catalysis depends on cysteine 50, which acts as the Nucleophile. 198–203 lines the NADP(+) pocket; the sequence is GAGRMS.

It belongs to the glutamyl-tRNA reductase family. Homodimer.

It carries out the reaction (S)-4-amino-5-oxopentanoate + tRNA(Glu) + NADP(+) = L-glutamyl-tRNA(Glu) + NADPH + H(+). It participates in porphyrin-containing compound metabolism; protoporphyrin-IX biosynthesis; 5-aminolevulinate from L-glutamyl-tRNA(Glu): step 1/2. The protein operates within porphyrin-containing compound metabolism; chlorophyll biosynthesis. Its function is as follows. Catalyzes the NADPH-dependent reduction of glutamyl-tRNA(Glu) to glutamate 1-semialdehyde (GSA). This chain is Glutamyl-tRNA reductase, found in Prochlorococcus marinus (strain MIT 9313).